The following is a 360-amino-acid chain: Nucleoporin SEH1 (360 aa).

WD repeat units follow at residues 10–49 (DHKD…DWHC), 55–96 (THSG…SNDK), 111–152 (DSRT…NLSQ), 160–210 (SCKL…RKYA), 217–258 (SVSD…KELS), and 276–315 (NHNS…NWKC).

The protein belongs to the WD repeat SEC13 family. Component of the Nup107-160 subcomplex of the nuclear pore complex (NPC). The Nup107-160 subcomplex includes NUP160, NUP133, NUP107, NUP98, NUP85, NUP43, NUP37, SEH1 and SEC13. Component of the GATOR2 subcomplex, composed of MIOS, SEC13, SEH1L, WDR24 and WDR59. The GATOR2 complex interacts with CASTOR1 and CASTOR2; the interaction is negatively regulated by arginine. The GATOR2 complex interacts with SESN1, SESN2 and SESN3; the interaction is negatively regulated by amino acids.

Its subcellular location is the chromosome. The protein resides in the centromere. The protein localises to the kinetochore. It is found in the nucleus. It localises to the nuclear pore complex. Its subcellular location is the lysosome membrane. The GATOR2 complex is negatively regulated by the upstream amino acid sensors CASTOR1 and SESN2, which sequester the GATOR2 complex in absence of amino acids. In the presence of abundant amino acids, GATOR2 is released from CASTOR1 and SESN2 and activated. In terms of biological role, component of the Nup107-160 subcomplex of the nuclear pore complex (NPC). The Nup107-160 subcomplex is required for the assembly of a functional NPC. The Nup107-160 subcomplex is also required for normal kinetochore microtubule attachment, mitotic progression and chromosome segregation. This subunit plays a role in recruitment of the Nup107-160 subcomplex to the kinetochore. Its function is as follows. As a component of the GATOR2 complex, functions as an activator of the amino acid-sensing branch of the mTORC1 signaling pathway. The GATOR2 complex indirectly activates mTORC1 through the inhibition of the GATOR1 subcomplex. GATOR2 probably acts as an E3 ubiquitin-protein ligase toward GATOR1. In the presence of abundant amino acids, the GATOR2 complex mediates ubiquitination of the NPRL2 core component of the GATOR1 complex, leading to GATOR1 inactivation. In the absence of amino acids, GATOR2 is inhibited, activating the GATOR1 complex. In Xenopus tropicalis (Western clawed frog), this protein is Nucleoporin SEH1 (seh1l).